The primary structure comprises 826 residues: Sister chromatid cohesion protein PDS5 homolog D (826 aa).

5 HEAT repeats span residues 18–54, 55–94, 151–188, 189–226, and 230–267; these read GTNLLSPPSSTDDLLTLLDETESLLKNVEQDQPLSMQ, SALIPSRNALVSVDLLSHPDSDVRVSVVSCLTEIVRITAP, DLILQMFRNFFKFIRSDHPQLVFSSMELIMIAIIDETE, QVSTDLLDSLLATVKKENQNVSPMSWSLAEKVLSRCAR, and PYIIEALKSRGTSLDMYSPVVSSICQSVFNTPKVHSPV. Disordered stretches follow at residues 261-551 and 640-826; these read PKVH…EVES and KKSK…KRKS. Composition is skewed to basic and acidic residues over residues 269-286 and 296-309; these read TKEHEEKLDLGHSRKENL and RHETRGINEKEKVR. Positions 281–288 match the Nuclear localization signal 1 motif; sequence SRKENLSK. The span at 311–323 shows a compositional bias: polar residues; sequence GNKSSLLKQSLKQ. The Nuclear localization signal 2 signature appears at 357-364; the sequence is GKRDPLKT. A compositionally biased stretch (polar residues) spans 396 to 408; sequence SPATSSRSLTGSL. An HEAT 6 repeat occupies 424–461; the sequence is SLSSPRLKKLASCFRDEEPNQEDDRKIGNSSKQTRSKN. A compositionally biased stretch (basic and acidic residues) spans 437–450; that stretch reads FRDEEPNQEDDRKI. Residues 451–460 are compositionally biased toward polar residues; the sequence is GNSSKQTRSK. Low complexity predominate over residues 644–663; the sequence is NVAVSVEPTSSSGVRSSSRT. The span at 665–701 shows a compositional bias: basic and acidic residues; sequence MKKDCGKRLNKQVEKTREGKNLRSLKELNAETDRTAE. Residues 702–724 are compositionally biased toward acidic residues; sequence EQEVSLEAESDDRSEEQEYEDDC. Residues 725–746 are compositionally biased toward basic and acidic residues; the sequence is SDKKEQSQDKGVEAETKEEEKQ. 3 stretches are compositionally biased toward acidic residues: residues 752 to 763, 771 to 800, and 811 to 826; these read GESEGEDSESEE, DDMEDDEEEEEEEIDHMEDEAEEEKEEVDD, and EKEEEEEEEDEEKRKS. A coiled-coil region spans residues 770–825; it reads TDDMEDDEEEEEEEIDHMEDEAEEEKEEVDDKEASANMSEIEKEEEEEEEDEEKRK.

This sequence belongs to the PDS5 family. In terms of assembly, interacts with the cohesin complex.

Its subcellular location is the nucleus. Its function is as follows. Cohesin cofactor dispensable during the meiotic division but playing an important role in DNA repair by homologous recombination (HR) probably by helping SMC5/SMC6 complex. Regulator of sister chromatid cohesion in mitosis which may stabilize cohesin complex association with chromatin. May couple sister chromatid cohesion during mitosis to DNA replication. Cohesion ensures that chromosome partitioning is accurate in both meiotic and mitotic cells and plays an important role in DNA repair. This Arabidopsis thaliana (Mouse-ear cress) protein is Sister chromatid cohesion protein PDS5 homolog D.